Reading from the N-terminus, the 860-residue chain is Protein argonaute-2 (860 aa).

The residue at position 2 (Tyr-2) is a 3'-nitrotyrosine. Residues 230–349 (PVIEFVCEVL…LPLEVCNIVA (120 aa)) form the PAZ domain. The tract at residues 312–317 (YFKDRH) is interaction with guide RNA. Position 388 is a phosphoserine (Ser-388). The 302-residue stretch at 518–819 (LVVVILPGKT…VAFRARYHLV (302 aa)) folds into the Piwi domain. The tract at residues 525–567 (GKTPVYAEVKRVGDTVLGMATQCVQMKNVQRTTPQTLSNLCLK) is interaction with guide RNA. The interval 588-591 (FQQP) is interaction with GW182 family members. Asp-598 lines the a divalent metal cation pocket. Residues 651–661 (LIQFYKSTRFK) form an interaction with GW182 family members region. Residue Asp-670 participates in a divalent metal cation binding. The residue at position 701 (Pro-701) is a 4-hydroxyproline. Interaction with guide RNA stretches follow at residues 710–711 (KR), 754–762 (HAGIQGTSR), and 791–813 (YVRC…VAFR). Residue His-808 coordinates a divalent metal cation. 4 positions are modified to phosphoserine: Ser-825, Ser-829, Ser-832, and Ser-835.

It belongs to the argonaute family. Ago subfamily. As to quaternary structure, interacts with DICER1 through its Piwi domain and with TARBP2 during assembly of the RNA-induced silencing complex (RISC). Together, DICER1, AGO2 and TARBP2 constitute the trimeric RISC loading complex (RLC), or micro-RNA (miRNA) loading complex (miRLC). Within the RLC/miRLC, DICER1 and TARBP2 are required to process precursor miRNAs (pre-miRNAs) to mature miRNAs and then load them onto AGO2. AGO2 bound to the mature miRNA constitutes the minimal RISC and may subsequently dissociate from DICER1 and TARBP2. Note however that the term RISC has also been used to describe the trimeric RLC/miRLC. The formation of RISC complexes containing siRNAs rather than miRNAs appears to occur independently of DICER1. Interacts with AGO1. Also interacts with DDB1, DDX5, DDX6, DDX20, DHX30, DHX36, DDX47, DHX9, ELAVL, FXR1, GEMIN4, HNRNPF, IGF2BP1, ILF3, IMP8, MATR3, PABPC1, PRMT5, P4HA1, P4HB, RBM4, SART3, TNRC6A, TNRC6B, UPF1 and YBX1. Interacts with the P-body components DCP1A and XRN1. Associates with polysomes and messenger ribonucleoproteins (mNRPs). Interacts with RBM4; the interaction is modulated under stress-induced conditions, occurs under both cell proliferation and differentiation conditions and in an RNA- and phosphorylation-independent manner. Interacts with LIMD1, WTIP and AJUBA. Interacts with TRIM71. Interacts with APOBEC3G in an RNA-dependent manner. Interacts with APOBEC3A, APOBEC3C, APOBEC3F and APOBEC3H. Interacts with DICER1, TARBP2, EIF6, MOV10 and RPL7A (60S ribosome subunit); they form a large RNA-induced silencing complex (RISC). Interacts with FMR1. Interacts with ZFP36. Interacts with RC3H1; the interaction is RNA independent. Interacts with ARB2A. Found in a complex composed of AGO2, CHD7 and ARB2A. Interacts with SND1 and SYT11. Interacts with CLNK. Interacts with GARRE1. Interacts with GRB2; this interaction is important for the formation of a ternary complex containing GRB2, AGO2 and DICER1. Mg(2+) is required as a cofactor. It depends on Mn(2+) as a cofactor. Post-translationally, hydroxylated. 4-hydroxylation appears to enhance protein stability but is not required for miRNA-binding or endonuclease activity. Ubiquitinated on surface-exposed lysines by a SCF-like E3 ubiquitin-protein ligase complex containing ZSWIM8 during target-directed microRNA degradation (TDMD), a process that mediates degradation of microRNAs (miRNAs). Ubiquitination by the SCF-like E3 ubiquitin-protein ligase complex containing ZSWIM8 leads to its subsequent degradation, thereby exposing miRNAs for degradation. ZSWIM8 recognizes and binds AGO2 when it is engaged with a TDMD target. In terms of processing, phosphorylation at Ser-388 by AKT3; leads to up-regulate translational repression of microRNA target and down-regulate endonucleolytic cleavage. Post-translationally, a phosphorylation cycle of C-terminal serine cluster (Ser-825-Ser-835) regulates the release of target mRNAs. Target-binding leads to phosphorylation of these residues by CSNK1A1, which reduces the affinity of AGO2 for mRNA and enables target release. The ANKRD52-PPP6C phosphatase complex dephosphorylates the residues, which primes AGO2 for binding a new target. As to expression, ubiquitous expression in 9.5 day embryos with highest levels in forebrain, heart, limb buds, and branchial arches.

The protein localises to the cytoplasm. Its subcellular location is the P-body. It is found in the nucleus. The catalysed reaction is Endonucleolytic cleavage to 5'-phosphomonoester.. Required for RNA-mediated gene silencing (RNAi) by the RNA-induced silencing complex (RISC). The 'minimal RISC' appears to include AGO2 bound to a short guide RNA such as a microRNA (miRNA) or short interfering RNA (siRNA). These guide RNAs direct RISC to complementary mRNAs that are targets for RISC-mediated gene silencing. The precise mechanism of gene silencing depends on the degree of complementarity between the miRNA or siRNA and its target. Binding of RISC to a perfectly complementary mRNA generally results in silencing due to endonucleolytic cleavage of the mRNA specifically by AGO2. Binding of RISC to a partially complementary mRNA results in silencing through inhibition of translation, and this is independent of endonuclease activity. May inhibit translation initiation by binding to the 7-methylguanosine cap, thereby preventing the recruitment of the translation initiation factor eIF4-E. May also inhibit translation initiation via interaction with EIF6, which itself binds to the 60S ribosomal subunit and prevents its association with the 40S ribosomal subunit. The inhibition of translational initiation leads to the accumulation of the affected mRNA in cytoplasmic processing bodies (P-bodies), where mRNA degradation may subsequently occur. In some cases RISC-mediated translational repression is also observed for miRNAs that perfectly match the 3' untranslated region (3'-UTR). Can also up-regulate the translation of specific mRNAs under certain growth conditions. Binds to the AU element of the 3'-UTR of the TNF (TNF-alpha) mRNA and up-regulates translation under conditions of serum starvation. Also required for transcriptional gene silencing (TGS), in which short RNAs known as antigene RNAs or agRNAs direct the transcriptional repression of complementary promoter regions. Regulates lymphoid and erythroid development and function, and this is independent of endonuclease activity. The sequence is that of Protein argonaute-2 (Ago2) from Mus musculus (Mouse).